The chain runs to 107 residues: Phosphoribosyl-ATP pyrophosphatase (107 aa).

The protein belongs to the PRA-PH family.

Its subcellular location is the cytoplasm. The catalysed reaction is 1-(5-phospho-beta-D-ribosyl)-ATP + H2O = 1-(5-phospho-beta-D-ribosyl)-5'-AMP + diphosphate + H(+). It participates in amino-acid biosynthesis; L-histidine biosynthesis; L-histidine from 5-phospho-alpha-D-ribose 1-diphosphate: step 2/9. This Sinorhizobium medicae (strain WSM419) (Ensifer medicae) protein is Phosphoribosyl-ATP pyrophosphatase.